Consider the following 1007-residue polypeptide: Exportin-7 (1007 aa).

The protein belongs to the exportin family.

It is found in the nucleus. The protein localises to the cytoplasm. Its subcellular location is the nuclear pore complex. Mediates the nuclear export of proteins (cargos) with broad substrate specificity. This chain is Exportin-7 (xpo7), found in Dictyostelium discoideum (Social amoeba).